Here is a 1820-residue protein sequence, read N- to C-terminus: MESNFNQEGVPRPSYVFSADPIARPSEINFDGIKLDLSHEFSLVAPNTEANSFESKDYLQVCLRIRPFTQSEKELESEGCVHILDSQTVVLKEPQCILGRLSEKSSGQMAQKFSFSKVFGPATTQKEFFQGCIMQPVKDLLKGQSRLIFTYGLTNSGKTYTFQGTEENIGILPRTLNVLFDSLQERLYTKMNLKPHRSREYLRLSSEQEKEEIASKSALLRQIKEVTVHNDSDDTLYGSLTNSLNISEFEESIKDYEQANLNMANSIKFSVWVSFFEIYNEYIYDLFVPVSSKFQKRKMLRLSQDVKGYSFIKDLQWIQVSDSKEAYRLLKLGIKHQSVAFTKLNNASSRSHSIFTVKILQIEDSEMSRVIRVSELSLCDLAGSERTMKTQNEGERLRETGNINTSLLTLGKCINVLKNSEKSKFQQHVPFRESKLTHYFQSFFNGKGKICMIVNISQCYLAYDETLNVLKFSAIAQKVCVPDTLNSSQEKLFGPVKSSQDVSLDSNSNSKILNVKRATISWENSLEDLMEDEDLVEELENAEETQNVETKLLDEDLDKTLEENKAFISHEEKRKLLDLIEDLKKKLINEKKEKLTLEFKIREEVTQEFTQYWAQREADFKETLLQEREILEENAERRLAIFKDLVGKCDTREEAAKDICATKVETEETHNYVGFEDIIDSLQDNVADIKKQAEIAHLYIASLPDPQEATACLELKFNQIKAELAKTKGELIKTKEELKKRENESDSLIQELETSNKKIITQNQRIKELINIIDQKEDTINEFQNLKSHMENTFKCNDKADTSSLIINNKLICNETVEVPKDSKSKICSERKRVNENELQQDEPPAKKGSIHVSSAITEDQKKSEEVRPNIAEIEDIRVLQENNEGLRAFLLTIENELKNEKEEKAELNKQIVHFQQELSLSEKKNLTLSKEVQQIQSNYDIAIAELHVQKSKNQEQEEKIMKLSNEIETATRSITNNVSQIKLMHTKIDELRTLDSVSQISNIDLLNLRDLSNGSEEDNLPNTQLDLLGNDYLVSKQVKEYRIQEPNRENSFHSSIEAIWEECKEIVKASSKKSHQIEELEQQIEKLQAEVKGYKDENNRLKEKEHKNQDDLLKEKETLIQQLKEELQEKNVTLDVQIQHVVEGKRALSELTQGVTCYKAKIKELETILETQKVECSHSAKLEQDILEKESIILKLERNLKEFQEHLQDSVKNTKDLNVKELKLKEEITQLTNNLQDMKHLLQLKEEEEETNRQETEKLKEELSASSARTQNLKADLQRKEEDYADLKEKLTDAKKQIKQVQKEVSVMRDEDKLLRIKINELEKKKNQCSQELDMKQRTIQQLKEQLNNQKVEEAIQQYERACKDLNVKEKIIEDMRMTLEEQEQTQVEQDQVLEAKLEEVERLATELEKWKEKCNDLETKNNQRSNKEHENNTDVLGKLTNLQDELQESEQKYNADRKKWLEEKMMLITQAKEAENIRNKEMKKYAEDRERFFKQQNEMEILTAQLTEKDSDLQKWREERDQLVAALEIQLKALISSNVQKDNEIEQLKRIISETSKIETQIMDIKPKRISSADPDKLQTEPLSTSFEISRNKIEDGSVVLDSCEVSTENDQSTRFPKPELEIQFTPLQPNKMAVKHPGCTTPVTVKIPKARKRKSNEMEEDLVKCENKKNATPRTNLKFPISDDRNSSVKKEQKVAIRPSSKKTYSLRSQASIIGVNLATKKKEGTLQKFGDFLQHSPSILQSKAKKIIETMSSSKLSNVEASKENVSQPKRAKRKLYTSEISSPIDISGQVILMDQKMKESDHQIIKRRLRTKTAK.

The 422-residue stretch at 58–479 (YLQVCLRIRP…LKFSAIAQKV (422 aa)) folds into the Kinesin motor domain. ATP is bound at residue 152-159 (GLTNSGKT). Ser488 is modified (phosphoserine). Coiled coils occupy residues 523-603 (ENSL…KIRE) and 674-793 (GFED…MENT). The residue at position 560 (Thr560) is a Phosphothreonine. The tract at residues 829 to 866 (SERKRVNENELQQDEPPAKKGSIHVSSAITEDQKKSEE) is disordered. Ser997 carries the post-translational modification Phosphoserine. The interval 1050-1107 (ENSFHSSIEAIWEECKEIVKASSKKSHQIEELEQQIEKLQAEVKGYKDENNRLKEKEH) is necessary and sufficient for interaction with SHTN1. Positions 1247-1264 (EEEEETNRQETEKLKEEL) are enriched in basic and acidic residues. The disordered stretch occupies residues 1247-1275 (EEEEETNRQETEKLKEELSASSARTQNLK). The segment covering 1265-1274 (SASSARTQNL) has biased composition (polar residues). Residues 1560 to 1820 (IETQIMDIKP…KRRLRTKTAK (261 aa)) form an interaction with PIN1 region. Ser1588 is subject to Phosphoserine. At Thr1644 the chain carries Phosphothreonine; by CDK1. A phosphoserine mark is found at Ser1658, Ser1715, and Ser1740. Over residues 1760 to 1772 (LSNVEASKENVSQ) the composition is skewed to polar residues. The tract at residues 1760 to 1781 (LSNVEASKENVSQPKRAKRKLY) is disordered.

Belongs to the TRAFAC class myosin-kinesin ATPase superfamily. Kinesin family. Oligomerizes (via kinesin motor domain). Associates with microtubules. Interacts (via C-terminal globular tail region) with PIN1 (via WW domain). Interacts with PRC1. Interacts with SHTN1 (via N-terminus); the interaction is direct and promotes the association of SHTN1 to microtubules in primary neurons. Phosphorylated during mitosis by CDK1. Brain, ovary, kidney and testis (at protein level). Overexpressed in bladder cancer cells (at protein level). Expressed in testis. Overexpressed in bladder cancer cells.

The protein resides in the nucleus. It is found in the cytoplasm. Its subcellular location is the cytoskeleton. It localises to the microtubule organizing center. The protein localises to the centrosome. The protein resides in the nucleolus. It is found in the nucleoplasm. Its subcellular location is the spindle. It localises to the spindle pole. The protein localises to the midbody. The protein resides in the cell projection. It is found in the axon. Its subcellular location is the growth cone. Plus-end-directed motor enzyme that is required for completion of cytokinesis. Required for proper midbody organization and abscission in polarized cortical stem cells. Plays a role in the regulation of neuronal polarization by mediating the transport of specific cargos. Participates in the mobilization of SHTN1 and in the accumulation of PIP3 in the growth cone of primary hippocampal neurons in a tubulin and actin-dependent manner. In the developing telencephalon, cooperates with SHTN1 to promote both the transition from the multipolar to the bipolar stage and the radial migration of cortical neurons from the ventricular zone toward the superficial layer of the neocortex. Involved in cerebral cortex growth. Acts as an oncogene for promoting bladder cancer cells proliferation, apoptosis inhibition and carcinogenic progression. This Homo sapiens (Human) protein is Kinesin-like protein KIF20B.